The following is a 141-amino-acid chain: Hemoglobin subunit alpha-D (141 aa).

The Globin domain occupies 1–141 (MLTAEDKKLI…VAAVLAEKYR (141 aa)). Positions 58 and 87 each coordinate heme b.

The protein belongs to the globin family. As to quaternary structure, heterotetramer of two alpha-D chains and two beta chains. As to expression, red blood cells.

Its function is as follows. Involved in oxygen transport from the lung to the various peripheral tissues. The protein is Hemoglobin subunit alpha-D (HBAD) of Apus apus (Common swift).